Reading from the N-terminus, the 763-residue chain is Phosphoglycerol transferase I (763 aa).

The next 4 membrane-spanning stretches (helical) occupy residues 1 to 21 (MSELLSFALFLASVLIYAWKA), 26 to 46 (WWFAATLTVLGLFVVLNITLF), 77 to 97 (ILPGIGIVLGLTAVFGALGWI), and 108 to 128 (FGYSLLALLLALGSVDASPAF).

This sequence belongs to the OpgB family.

It is found in the cell inner membrane. It carries out the reaction a phosphatidylglycerol + a membrane-derived-oligosaccharide D-glucose = a 1,2-diacyl-sn-glycerol + a membrane-derived-oligosaccharide 6-(glycerophospho)-D-glucose.. The protein operates within glycan metabolism; osmoregulated periplasmic glucan (OPG) biosynthesis. Functionally, transfers a phosphoglycerol residue from phosphatidylglycerol to the membrane-bound nascent glucan backbones. The sequence is that of Phosphoglycerol transferase I from Escherichia coli O45:K1 (strain S88 / ExPEC).